Consider the following 555-residue polypeptide: Chaperonin GroEL (555 aa).

Residues 29–32 (TLGP), Lys50, 86–90 (DGTTT), Gly418, and Asp499 contribute to the ATP site. Positions 528-555 (HEEDNNTGNRSGGGVGGGHHGGMGGMDF) are disordered. Over residues 537 to 555 (RSGGGVGGGHHGGMGGMDF) the composition is skewed to gly residues.

This sequence belongs to the chaperonin (HSP60) family. Forms a cylinder of 14 subunits composed of two heptameric rings stacked back-to-back. Interacts with the co-chaperonin GroES.

The protein resides in the cytoplasm. It catalyses the reaction ATP + H2O + a folded polypeptide = ADP + phosphate + an unfolded polypeptide.. Its function is as follows. Together with its co-chaperonin GroES, plays an essential role in assisting protein folding. The GroEL-GroES system forms a nano-cage that allows encapsulation of the non-native substrate proteins and provides a physical environment optimized to promote and accelerate protein folding. In Orientia tsutsugamushi (strain Ikeda) (Rickettsia tsutsugamushi), this protein is Chaperonin GroEL.